Reading from the N-terminus, the 121-residue chain is uncharacterized protein (121 aa).

Residues 7–121 (IFCKIVRGEV…GGREMSWPPG (115 aa)) form the HIT domain. A Histidine triad motif motif is present at residues 105-109 (HLHLH).

This is an uncharacterized protein from Aquifex aeolicus (strain VF5).